Here is a 154-residue protein sequence, read N- to C-terminus: NADPH-dependent 7-cyano-7-deazaguanine reductase (154 aa).

The span at Met-1–Ser-21 shows a compositional bias: polar residues. Positions Met-1 to Val-26 are disordered. Cys-52 serves as the catalytic Thioimide intermediate. Asp-59 (proton donor) is an active-site residue. Substrate contacts are provided by residues Val-74–Ser-76 and His-93–Glu-94.

The protein belongs to the GTP cyclohydrolase I family. QueF type 1 subfamily.

The protein localises to the cytoplasm. The catalysed reaction is 7-aminomethyl-7-carbaguanine + 2 NADP(+) = 7-cyano-7-deazaguanine + 2 NADPH + 3 H(+). The protein operates within tRNA modification; tRNA-queuosine biosynthesis. Its function is as follows. Catalyzes the NADPH-dependent reduction of 7-cyano-7-deazaguanine (preQ0) to 7-aminomethyl-7-deazaguanine (preQ1). The polypeptide is NADPH-dependent 7-cyano-7-deazaguanine reductase (Rhizobium etli (strain ATCC 51251 / DSM 11541 / JCM 21823 / NBRC 15573 / CFN 42)).